The chain runs to 877 residues: Phosphoenolpyruvate carboxylase (877 aa).

Residues His-138 and Lys-544 contribute to the active site.

This sequence belongs to the PEPCase type 1 family. The cofactor is Mg(2+).

The catalysed reaction is oxaloacetate + phosphate = phosphoenolpyruvate + hydrogencarbonate. Forms oxaloacetate, a four-carbon dicarboxylic acid source for the tricarboxylic acid cycle. This is Phosphoenolpyruvate carboxylase from Vibrio vulnificus (strain CMCP6).